The chain runs to 104 residues: L-rhamnose mutarotase (104 aa).

Substrate is bound at residue Tyr-18. The active-site Proton donor is the His-22. Substrate-binding positions include Tyr-41 and 76 to 77 (WW).

This sequence belongs to the rhamnose mutarotase family. Homodimer.

Its subcellular location is the cytoplasm. The catalysed reaction is alpha-L-rhamnose = beta-L-rhamnose. It functions in the pathway carbohydrate metabolism; L-rhamnose metabolism. Its function is as follows. Involved in the anomeric conversion of L-rhamnose. In Burkholderia ambifaria (strain ATCC BAA-244 / DSM 16087 / CCUG 44356 / LMG 19182 / AMMD) (Burkholderia cepacia (strain AMMD)), this protein is L-rhamnose mutarotase.